The primary structure comprises 765 residues: 1,4-alpha-glucan branching enzyme GlgB (765 aa).

The active-site Nucleophile is the D431. E484 functions as the Proton donor in the catalytic mechanism.

It belongs to the glycosyl hydrolase 13 family. GlgB subfamily. As to quaternary structure, monomer.

The catalysed reaction is Transfers a segment of a (1-&gt;4)-alpha-D-glucan chain to a primary hydroxy group in a similar glucan chain.. It participates in glycan biosynthesis; glycogen biosynthesis. Functionally, catalyzes the formation of the alpha-1,6-glucosidic linkages in glycogen by scission of a 1,4-alpha-linked oligosaccharide from growing alpha-1,4-glucan chains and the subsequent attachment of the oligosaccharide to the alpha-1,6 position. In Synechococcus sp. (strain CC9311), this protein is 1,4-alpha-glucan branching enzyme GlgB.